The primary structure comprises 277 residues: Probable endonuclease 4 (277 aa).

Zn(2+)-binding residues include His67, His107, Glu142, Asp176, His179, His211, Asp224, His226, and Glu256.

It belongs to the AP endonuclease 2 family. It depends on Zn(2+) as a cofactor.

The catalysed reaction is Endonucleolytic cleavage to 5'-phosphooligonucleotide end-products.. Functionally, endonuclease IV plays a role in DNA repair. It cleaves phosphodiester bonds at apurinic or apyrimidinic (AP) sites, generating a 3'-hydroxyl group and a 5'-terminal sugar phosphate. The sequence is that of Probable endonuclease 4 from Clostridium beijerinckii (strain ATCC 51743 / NCIMB 8052) (Clostridium acetobutylicum).